Here is an 852-residue protein sequence, read N- to C-terminus: Beta-galactosidase 8 (852 aa).

Residues 1–29 form the signal peptide; the sequence is MEIAAKMVKVRKMEMILLLILVIVVAATA. An N-linked (GlcNAc...) asparagine glycan is attached at Asn-31. Glu-188 serves as the catalytic Proton donor. Residue Glu-257 is the Nucleophile of the active site. Residues Asn-258, Asn-475, Asn-766, and Asn-807 are each glycosylated (N-linked (GlcNAc...) asparagine). The 87-residue stretch at 766-852 folds into the SUEL-type lectin domain; sequence NRTRPVLSLK…KSLAVEASCS (87 aa).

The protein belongs to the glycosyl hydrolase 35 family. As to expression, expressed in roots, flowers and siliques.

The protein localises to the secreted. It is found in the extracellular space. It localises to the apoplast. It catalyses the reaction Hydrolysis of terminal non-reducing beta-D-galactose residues in beta-D-galactosides.. The polypeptide is Beta-galactosidase 8 (BGAL8) (Arabidopsis thaliana (Mouse-ear cress)).